Here is a 239-residue protein sequence, read N- to C-terminus: Carboxy-S-adenosyl-L-methionine synthase (239 aa).

S-adenosyl-L-methionine is bound by residues Tyr-35, 64–66, 88–89, and Arg-195; these read GCS and DN.

It belongs to the class I-like SAM-binding methyltransferase superfamily. Cx-SAM synthase family. Homodimer.

The enzyme catalyses prephenate + S-adenosyl-L-methionine = carboxy-S-adenosyl-L-methionine + 3-phenylpyruvate + H2O. Its function is as follows. Catalyzes the conversion of S-adenosyl-L-methionine (SAM) to carboxy-S-adenosyl-L-methionine (Cx-SAM). In Helicobacter pylori (strain HPAG1), this protein is Carboxy-S-adenosyl-L-methionine synthase.